Consider the following 650-residue polypeptide: Threonine--tRNA ligase, chloroplastic/mitochondrial 2 (650 aa).

Zn(2+) is bound by residues Cys347, His398, and His524.

It belongs to the class-II aminoacyl-tRNA synthetase family.

Its subcellular location is the plastid. The protein localises to the chloroplast. The protein resides in the mitochondrion. The enzyme catalyses tRNA(Thr) + L-threonine + ATP = L-threonyl-tRNA(Thr) + AMP + diphosphate + H(+). The chain is Threonine--tRNA ligase, chloroplastic/mitochondrial 2 from Arabidopsis thaliana (Mouse-ear cress).